The primary structure comprises 672 residues: Nuclear hormone receptor family member nhr-5 (672 aa).

The span at 1–19 (MSSGGNSSNVNRNSGSSNV) shows a compositional bias: low complexity. Residues 1 to 38 (MSSGGNSSNVNRNSGSSNVITLNDSDEETEDSNLGSSS) are disordered. The nuclear receptor DNA-binding region spans 40-115 (TNLCKVCGAE…EGMNPAYVRP (76 aa)). 2 NR C4-type zinc fingers span residues 43–63 (CKVCGAEKAALHYGALSCVGC) and 79–98 (CAANGECTVSVLQKTQCRSC). Residues 155-424 (EMRTILMTLL…PLLTDLFGCF (270 aa)) enclose the NR LBD domain. The interval 550–577 (NIQGPSHLPQCGSTVTQRPTVPSSTTSS) is disordered. The segment covering 562–577 (STVTQRPTVPSSTTSS) has biased composition (low complexity).

It belongs to the nuclear hormone receptor family.

Its subcellular location is the nucleus. In terms of biological role, orphan nuclear receptor. The protein is Nuclear hormone receptor family member nhr-5 (nhr-5) of Caenorhabditis elegans.